Here is a 432-residue protein sequence, read N- to C-terminus: Trigger factor (432 aa).

One can recognise a PPIase FKBP-type domain in the interval 161 to 246; it reads DDRVTIDFVG…LKKIENMVLP (86 aa).

It belongs to the FKBP-type PPIase family. Tig subfamily.

Its subcellular location is the cytoplasm. It carries out the reaction [protein]-peptidylproline (omega=180) = [protein]-peptidylproline (omega=0). In terms of biological role, involved in protein export. Acts as a chaperone by maintaining the newly synthesized protein in an open conformation. Functions as a peptidyl-prolyl cis-trans isomerase. The polypeptide is Trigger factor (Haemophilus influenzae (strain PittEE)).